The sequence spans 148 residues: D-aminoacyl-tRNA deacylase (148 aa).

Positions 137-138 (GP) match the Gly-cisPro motif, important for rejection of L-amino acids motif.

Belongs to the DTD family. As to quaternary structure, homodimer.

Its subcellular location is the cytoplasm. It catalyses the reaction glycyl-tRNA(Ala) + H2O = tRNA(Ala) + glycine + H(+). The catalysed reaction is a D-aminoacyl-tRNA + H2O = a tRNA + a D-alpha-amino acid + H(+). Functionally, an aminoacyl-tRNA editing enzyme that deacylates mischarged D-aminoacyl-tRNAs. Also deacylates mischarged glycyl-tRNA(Ala), protecting cells against glycine mischarging by AlaRS. Acts via tRNA-based rather than protein-based catalysis; rejects L-amino acids rather than detecting D-amino acids in the active site. By recycling D-aminoacyl-tRNA to D-amino acids and free tRNA molecules, this enzyme counteracts the toxicity associated with the formation of D-aminoacyl-tRNA entities in vivo and helps enforce protein L-homochirality. The polypeptide is D-aminoacyl-tRNA deacylase (Enterococcus faecalis (strain ATCC 700802 / V583)).